We begin with the raw amino-acid sequence, 219 residues long: Cell division protein B2 (219 aa).

Its function is as follows. Part of a cell division machinery. This Sulfolobus acidocaldarius (strain ATCC 33909 / DSM 639 / JCM 8929 / NBRC 15157 / NCIMB 11770) protein is Cell division protein B2.